Consider the following 141-residue polypeptide: Drosulfakinins (141 aa).

Residues Met1–Ala31 form the signal peptide. The propeptide occupies Gln32 to Asp73. The interval Glu49 to Ser69 is disordered. Phe82 is modified (phenylalanine amide). The propeptide occupies Val86–Ala111. Tyr117 is modified (sulfotyrosine). The residue at position 122 (Phe122) is a Phenylalanine amide. Sulfotyrosine is present on Tyr134. Phenylalanine amide is present on Phe139.

The protein belongs to the gastrin/cholecystokinin family.

Its subcellular location is the secreted. Drosulfakinin-0 (DSK 0) plays diverse biological roles including regulating gut muscle contraction in adults but not in larvae. In Drosophila erecta (Fruit fly), this protein is Drosulfakinins.